Here is a 455-residue protein sequence, read N- to C-terminus: Polyadenylation factor subunit 2 (455 aa).

WD repeat units follow at residues 80–119 (KVKH…FETI), 122–162 (AHDT…KELD), 164–203 (IHTE…QERV), 206–245 (GHHW…CVST), 248–288 (KFKH…NELM), 291–331 (RDEV…EKPI), and 337–376 (AHEK…DPNA). 2 disordered regions span residues 406–425 (EYGA…TQYN) and 430–455 (RVPE…GLSI). The span at 432-446 (PEIKEPTPTTDKEQR) shows a compositional bias: basic and acidic residues.

The protein resides in the nucleus. In terms of biological role, required for 3'-end cleavage and polyadenylation of pre-mRNAs. Also involved in chromosome segregation where it has a role in chromosome attachment to the mitotic spindle. This Candida glabrata (strain ATCC 2001 / BCRC 20586 / JCM 3761 / NBRC 0622 / NRRL Y-65 / CBS 138) (Yeast) protein is Polyadenylation factor subunit 2 (PFS2).